Here is a 344-residue protein sequence, read N- to C-terminus: Serpentine receptor class delta-3 (344 aa).

7 helical membrane passes run Ile21–Ile41, Met54–Leu74, Phe102–Phe122, Ile142–Ala162, Phe203–Phe223, Ile259–Val279, and Met287–Val307.

It belongs to the nematode receptor-like protein srd family.

The protein resides in the membrane. The protein is Serpentine receptor class delta-3 (srd-3) of Caenorhabditis elegans.